The following is a 279-amino-acid chain: Oxygen-dependent coproporphyrinogen-III oxidase (279 aa).

Ser-102 serves as a coordination point for substrate. The a divalent metal cation site is built by His-106 and His-116. His-116 acts as the Proton donor in catalysis. Position 118-120 (118-120 (NTR)) interacts with substrate. His-149 and His-179 together coordinate a divalent metal cation. Positions 244–279 (YVEFNLLYDRGTKFGLMTDGNVEAILMSLPPEVKWA) are important for dimerization.

The protein belongs to the aerobic coproporphyrinogen-III oxidase family. In terms of assembly, homodimer. A divalent metal cation is required as a cofactor.

Its subcellular location is the cytoplasm. The catalysed reaction is coproporphyrinogen III + O2 + 2 H(+) = protoporphyrinogen IX + 2 CO2 + 2 H2O. It participates in porphyrin-containing compound metabolism; protoporphyrin-IX biosynthesis; protoporphyrinogen-IX from coproporphyrinogen-III (O2 route): step 1/1. Its function is as follows. Involved in the heme biosynthesis. Catalyzes the aerobic oxidative decarboxylation of propionate groups of rings A and B of coproporphyrinogen-III to yield the vinyl groups in protoporphyrinogen-IX. The sequence is that of Oxygen-dependent coproporphyrinogen-III oxidase from Rickettsia bellii (strain RML369-C).